The primary structure comprises 687 residues: Sphingoid long chain base kinase 5 (687 aa).

The interval 1-20 (MTLKPSKRRKGRSRHSRKKQ) is disordered. Residues Cys91 and Cys94 are each lipidated (S-palmitoyl cysteine; by AKR1). A compositionally biased stretch (basic and acidic residues) spans 101 to 116 (IDRSETSTTDTSKDDL). Disordered regions lie at residues 101-130 (IDRS…VNGQ) and 180-207 (DELE…SLLT). Over residues 193 to 207 (NSLSRGSNSSSSLLT) the composition is skewed to low complexity. Positions 266 to 405 (RRNKSIFVII…IDLMCCSQPS (140 aa)) constitute a DAGKc domain. ATP is bound by residues 276 to 278 (NPF) and Thr308. 333–336 (SGDG) is a substrate binding site. Catalysis depends on Asp335, which acts as the Proton donor/acceptor. ATP is bound by residues Glu340, 366-368 (GSG), Arg434, and Arg440. Positions 506-524 (EYETENEDEDEDADADDED) are enriched in acidic residues. A disordered region spans residues 506–525 (EYETENEDEDEDADADDEDS). Residue 652 to 654 (DGE) coordinates ATP.

It localises to the golgi apparatus membrane. The catalysed reaction is (4R)-hydroxysphinganine + ATP = (4R)-hydroxysphinganine 1-phosphate + ADP + H(+). The enzyme catalyses a sphingoid base + ATP = a sphingoid 1-phosphate + ADP + H(+). It catalyses the reaction sphinganine + ATP = sphinganine 1-phosphate + ADP + H(+). Functionally, catalyzes the phosphorylation of the sphingoid long chain bases dihydrosphingosine (DHS or sphinganine) and phytosphingosine (PHS) to form dihydrosphingosine 1-phosphate (DHS-1P) and phytosphingosine 1-phosphate (PHS-1P) respectively. Redundant to LCB4, is only responsible for few percent of the total activity. Involved in the biosynthesis of sphingolipids and ceramides. Involved in heat-induced transient cell cycle arrest. Accumulation of phosphorylated sphingoid long chain bases (LCBPs) stimulates calcium influx and activates calcineurin signaling. Involved in heat-stress resistance. The sequence is that of Sphingoid long chain base kinase 5 (LCB5) from Saccharomyces cerevisiae (strain ATCC 204508 / S288c) (Baker's yeast).